Reading from the N-terminus, the 174-residue chain is Peptide deformylase (174 aa).

Fe cation contacts are provided by Cys-96 and His-138. The active site involves Glu-139. His-142 contributes to the Fe cation binding site.

This sequence belongs to the polypeptide deformylase family. It depends on Fe(2+) as a cofactor.

It catalyses the reaction N-terminal N-formyl-L-methionyl-[peptide] + H2O = N-terminal L-methionyl-[peptide] + formate. Removes the formyl group from the N-terminal Met of newly synthesized proteins. Requires at least a dipeptide for an efficient rate of reaction. N-terminal L-methionine is a prerequisite for activity but the enzyme has broad specificity at other positions. The protein is Peptide deformylase of Helicobacter pylori (strain HPAG1).